The chain runs to 367 residues: Pectate lyase 1 (367 aa).

The N-terminal stretch at M1–S21 is a signal peptide. Disulfide bonds link C28–C45 and C128–C147. N-linked (GlcNAc...) asparagine glycosylation occurs at N148. D170 contributes to the Ca(2+) binding site. The N-linked (GlcNAc...) asparagine glycan is linked to N178. Ca(2+) is bound by residues D194 and D198. The active site involves R250. N293 carries an N-linked (GlcNAc...) asparagine glycan. A disulfide bridge links C306 with C312.

It belongs to the polysaccharide lyase 1 family. Amb a subfamily. Requires Ca(2+) as cofactor.

The catalysed reaction is Eliminative cleavage of (1-&gt;4)-alpha-D-galacturonan to give oligosaccharides with 4-deoxy-alpha-D-galact-4-enuronosyl groups at their non-reducing ends.. Its pathway is glycan metabolism; pectin degradation; 2-dehydro-3-deoxy-D-gluconate from pectin: step 2/5. Its function is as follows. Has pectate lyase activity. The chain is Pectate lyase 1 from Hesperocyparis arizonica (Arizona cypress).